The chain runs to 248 residues: Proteasome subunit alpha type-1 (248 aa).

This sequence belongs to the peptidase T1A family. As to quaternary structure, the 26S proteasome consists of a 20S proteasome core and two 19S regulatory subunits. The 20S proteasome core is composed of 28 subunits that are arranged in four stacked rings, resulting in a barrel-shaped structure. The two end rings are each formed by seven alpha subunits, and the two central rings are each formed by seven beta subunits. The catalytic chamber with the active sites is on the inside of the barrel.

Its subcellular location is the cytoplasm. The protein resides in the nucleus. The proteasome is a multicatalytic proteinase complex which is characterized by its ability to cleave peptides with Arg, Phe, Tyr, Leu, and Glu adjacent to the leaving group at neutral or slightly basic pH. The proteasome has an ATP-dependent proteolytic activity. This chain is Proteasome subunit alpha type-1 (psmA1), found in Dictyostelium discoideum (Social amoeba).